The chain runs to 40 residues: Photosystem I reaction center subunit IX (40 aa).

The chain crosses the membrane as a helical span at residues 4–24 (FFESWPMAAVLWVWLTAGIIV).

This sequence belongs to the PsaJ family.

It is found in the cellular thylakoid membrane. Its function is as follows. May help in the organization of the PsaE and PsaF subunits. The polypeptide is Photosystem I reaction center subunit IX (Prochlorococcus marinus (strain MIT 9313)).